The following is a 302-amino-acid chain: Protein KTI12 homolog (302 aa).

An ATP-binding site is contributed by 8–15 (GQPCSGKS). Positions 260–273 (LRRTFVKLMGQSSL) are calmodulin-binding.

It belongs to the KTI12 family. In terms of assembly, interacts with the elongator complex. Binds to calmodulin in a calcium-dependent manner. As to expression, expressed in roots, hypocotyls, cotyledons, shoot apices, stems, inflorescence apices, leaves and flowers.

It localises to the cytoplasm. It is found in the nucleus. In terms of biological role, elongator complex-associated factor that is not a structural subunit but rather transiently contacts the complex. Regulates both meristem activity and organ growth; acts as a positive regulator of adaxial leaf patterning by modulating both cell division and differentiation. Required for an early step in synthesis of 5-carbamoylmethyl (ncm5) groups present on uridines (ncm5U) at the wobble position in tRNA. This chain is Protein KTI12 homolog, found in Arabidopsis thaliana (Mouse-ear cress).